Consider the following 273-residue polypeptide: ATP synthase subunit delta (273 aa).

Residues 55-78 (TDPAQSARPRPSSPSVSSAPRSAA) are disordered. The span at 57–78 (PAQSARPRPSSPSVSSAPRSAA) shows a compositional bias: low complexity.

Belongs to the ATPase delta chain family. In terms of assembly, F-type ATPases have 2 components, F(1) - the catalytic core - and F(0) - the membrane proton channel. F(1) has five subunits: alpha(3), beta(3), gamma(1), delta(1), epsilon(1). F(0) has three main subunits: a(1), b(2) and c(10-14). The alpha and beta chains form an alternating ring which encloses part of the gamma chain. F(1) is attached to F(0) by a central stalk formed by the gamma and epsilon chains, while a peripheral stalk is formed by the delta and b chains.

The protein localises to the cell membrane. In terms of biological role, f(1)F(0) ATP synthase produces ATP from ADP in the presence of a proton or sodium gradient. F-type ATPases consist of two structural domains, F(1) containing the extramembraneous catalytic core and F(0) containing the membrane proton channel, linked together by a central stalk and a peripheral stalk. During catalysis, ATP synthesis in the catalytic domain of F(1) is coupled via a rotary mechanism of the central stalk subunits to proton translocation. This protein is part of the stalk that links CF(0) to CF(1). It either transmits conformational changes from CF(0) to CF(1) or is implicated in proton conduction. The sequence is that of ATP synthase subunit delta from Streptomyces lividans.